The sequence spans 508 residues: ATP synthase subunit alpha, mitochondrial (508 aa).

Residue Gly-171–Thr-178 participates in ATP binding.

It belongs to the ATPase alpha/beta chains family. F-type ATPases have 2 components, CF(1) - the catalytic core - and CF(0) - the membrane proton channel. CF(1) has five subunits: alpha(3), beta(3), gamma(1), delta(1), epsilon(1). CF(0) has three main subunits: a, b and c.

The protein resides in the mitochondrion. It localises to the mitochondrion inner membrane. Mitochondrial membrane ATP synthase (F(1)F(0) ATP synthase or Complex V) produces ATP from ADP in the presence of a proton gradient across the membrane which is generated by electron transport complexes of the respiratory chain. F-type ATPases consist of two structural domains, F(1) - containing the extramembraneous catalytic core, and F(0) - containing the membrane proton channel, linked together by a central stalk and a peripheral stalk. During catalysis, ATP synthesis in the catalytic domain of F(1) is coupled via a rotary mechanism of the central stalk subunits to proton translocation. Subunits alpha and beta form the catalytic core in F(1). Rotation of the central stalk against the surrounding alpha(3)beta(3) subunits leads to hydrolysis of ATP in three separate catalytic sites on the beta subunits. Subunit alpha does not bear the catalytic high-affinity ATP-binding sites. This Zea mays (Maize) protein is ATP synthase subunit alpha, mitochondrial (ATPA).